Reading from the N-terminus, the 220-residue chain is ATP-dependent dethiobiotin synthetase BioD (220 aa).

Residue 11 to 16 (GVGKTF) coordinates ATP. Residue T15 coordinates Mg(2+). K36 is a catalytic residue. A substrate-binding site is contributed by T40. Residues D48 and 107–110 (EGAG) each bind ATP. Mg(2+) contacts are provided by D48 and E107.

The protein belongs to the dethiobiotin synthetase family. In terms of assembly, homodimer. Requires Mg(2+) as cofactor.

The protein localises to the cytoplasm. The enzyme catalyses (7R,8S)-7,8-diammoniononanoate + CO2 + ATP = (4R,5S)-dethiobiotin + ADP + phosphate + 3 H(+). The protein operates within cofactor biosynthesis; biotin biosynthesis; biotin from 7,8-diaminononanoate: step 1/2. In terms of biological role, catalyzes a mechanistically unusual reaction, the ATP-dependent insertion of CO2 between the N7 and N8 nitrogen atoms of 7,8-diaminopelargonic acid (DAPA, also called 7,8-diammoniononanoate) to form a ureido ring. In Aquifex aeolicus (strain VF5), this protein is ATP-dependent dethiobiotin synthetase BioD.